A 244-amino-acid polypeptide reads, in one-letter code: Cell division protein ZapD (244 aa).

Belongs to the ZapD family. Interacts with FtsZ.

Its subcellular location is the cytoplasm. Functionally, cell division factor that enhances FtsZ-ring assembly. Directly interacts with FtsZ and promotes bundling of FtsZ protofilaments, with a reduction in FtsZ GTPase activity. The polypeptide is Cell division protein ZapD (Shewanella oneidensis (strain ATCC 700550 / JCM 31522 / CIP 106686 / LMG 19005 / NCIMB 14063 / MR-1)).